Consider the following 230-residue polypeptide: Ureidoacrylate amidohydrolase RutB (230 aa).

The active-site Proton acceptor is the Asp24. Residue Lys133 is part of the active site. The active-site Nucleophile is the Cys166.

This sequence belongs to the isochorismatase family. RutB subfamily.

It catalyses the reaction (Z)-3-ureidoacrylate + H2O + H(+) = (Z)-3-aminoacrylate + NH4(+) + CO2. The enzyme catalyses (Z)-3-ureidoacrylate + H2O = (Z)-3-aminoacrylate + carbamate + H(+). The catalysed reaction is (Z)-2-methylureidoacrylate + H2O + H(+) = (Z)-2-methylaminoacrylate + NH4(+) + CO2. Its function is as follows. Hydrolyzes ureidoacrylate to form aminoacrylate and carbamate. The carbamate hydrolyzes spontaneously, thereby releasing one of the nitrogen atoms of the pyrimidine ring as ammonia and one of its carbon atoms as CO2. The protein is Ureidoacrylate amidohydrolase RutB of Escherichia coli O103:H2 (strain 12009 / EHEC).